Consider the following 645-residue polypeptide: Aspartate--tRNA ligase, mitochondrial (645 aa).

A mitochondrion-targeting transit peptide spans 1 to 47; it reads MYFPSWLSQLYRGLSRPIRRTTQPIWGSLYRSLLQSSQRRIPEFSSF. Threonine 219 carries the post-translational modification Phosphothreonine. Serine 242 is subject to Phosphoserine. Positions 244-247 are aspartate; that stretch reads QQFK. Arginine 266 contacts L-aspartate. ATP is bound at residue 266–268; the sequence is RDE. N6-acetyllysine is present on lysine 382. Glutamate 535 contributes to the ATP binding site. Residue arginine 542 participates in L-aspartate binding. An ATP-binding site is contributed by 584 to 587; the sequence is GLDR.

It belongs to the class-II aminoacyl-tRNA synthetase family. Type 1 subfamily. In terms of assembly, homodimer.

It localises to the mitochondrion matrix. Its subcellular location is the mitochondrion membrane. It catalyses the reaction tRNA(Asp) + L-aspartate + ATP = L-aspartyl-tRNA(Asp) + AMP + diphosphate. Its function is as follows. Catalyzes the attachment of aspartate to tRNA(Asp) in a two-step reaction: aspartate is first activated by ATP to form Asp-AMP and then transferred to the acceptor end of tRNA(Asp). The polypeptide is Aspartate--tRNA ligase, mitochondrial (DARS2) (Homo sapiens (Human)).